We begin with the raw amino-acid sequence, 1259 residues long: Translocation and assembly module subunit TamB (1259 aa).

Residue Met1 is modified to N-formylmethionine. Residues 1–6 (MSLWKK) lie on the Cytoplasmic side of the membrane. The chain crosses the membrane as a helical; Signal-anchor for type II membrane protein span at residues 7 to 27 (ISLGVVIVILLLLGSVAFLVG). At 28–1259 (TTSGLHLVFK…ALDLLYQFEF (1232 aa)) the chain is on the periplasmic side.

Belongs to the TamB family. In terms of assembly, interacts with TamA to form the translocation and assembly module (TAM).

The protein localises to the cell inner membrane. Its function is as follows. Component of the translocation and assembly module (TAM), which facilitates the insertion and assembly of specific beta-barrel proteins into the outer membrane. Promotes the assembly and secretion across the outer membrane of a subset of autotransporters, such as Ag43. Involved in the assembly of the outer membrane usher protein FimD. In vitro, when TAM is reconstituted into preformed liposomes, it can promote the assembly of several outer membrane proteins, including OmpA, EspP, Ag43 and FadL. TamA is sufficient to catalyze a low level of outer membrane protein (OMP) assembly, but both TamA and TamB are required for efficient OMP assembly. TamB may regulate TamA activity. It could regulate conformational changes in TamA to drive its function in OMP assembly. It could also act as a chaperone that facilitate the transport of nascent membrane proteins across the periplasm to TamA in the outer membrane. Functionally, in addition, is involved in outer membrane lipid homeostasis. Likely transports phospholipids between the inner membrane and the outer membrane. It would provide a bridge-like structure that protects phospholipids as they travel across the periplasm. One possible explanation for the apparent dual function of TAM is that TamB is a somewhat generic transporter of hydrophobic molecules. In terms of biological role, tamB, YdbH and YhdP are redundant, but not equivalent, in performing an essential function for growth and maintaining lipid homeostasis in the outer membrane. The transport functions of TamB and YhdP could be differentiated according to the fatty acid saturation state of the phospholipids, with TamB transporting more unsaturated phospholipids and YhdP more saturated phospholipids. Any of these three proteins is sufficient for growth. The sequence is that of Translocation and assembly module subunit TamB from Escherichia coli (strain K12).